The primary structure comprises 253 residues: Isoprenyl transferase (253 aa).

The active site involves Asp30. Mg(2+) is bound at residue Asp30. Residues 31-34, Trp35, His51, and 79-81 contribute to the substrate site; these read GNRR and STE. Catalysis depends on Asn82, which acts as the Proton acceptor. Residues Phe83, Arg85, Arg202, and 208 to 210 contribute to the substrate site; that span reads RVS. Glu221 is a binding site for Mg(2+).

This sequence belongs to the UPP synthase family. In terms of assembly, homodimer. Mg(2+) serves as cofactor.

In terms of biological role, catalyzes the condensation of isopentenyl diphosphate (IPP) with allylic pyrophosphates generating different type of terpenoids. The sequence is that of Isoprenyl transferase from Chlamydia trachomatis serovar D (strain ATCC VR-885 / DSM 19411 / UW-3/Cx).